The chain runs to 407 residues: Arginine deiminase (407 aa).

The Amidino-cysteine intermediate role is filled by Cys-397.

It belongs to the arginine deiminase family.

It localises to the cytoplasm. It carries out the reaction L-arginine + H2O = L-citrulline + NH4(+). It participates in amino-acid degradation; L-arginine degradation via ADI pathway; carbamoyl phosphate from L-arginine: step 1/2. The chain is Arginine deiminase from Vibrio cholerae serotype O1 (strain ATCC 39541 / Classical Ogawa 395 / O395).